We begin with the raw amino-acid sequence, 159 residues long: Ribosomal RNA large subunit methyltransferase H (159 aa).

S-adenosyl-L-methionine contacts are provided by residues L76, G108, and 127–132; that span reads FSKMTF.

The protein belongs to the RNA methyltransferase RlmH family. Homodimer.

The protein resides in the cytoplasm. It catalyses the reaction pseudouridine(1915) in 23S rRNA + S-adenosyl-L-methionine = N(3)-methylpseudouridine(1915) in 23S rRNA + S-adenosyl-L-homocysteine + H(+). Functionally, specifically methylates the pseudouridine at position 1915 (m3Psi1915) in 23S rRNA. The protein is Ribosomal RNA large subunit methyltransferase H of Lachnospira eligens (strain ATCC 27750 / DSM 3376 / VPI C15-48 / C15-B4) (Eubacterium eligens).